The chain runs to 435 residues: Cell adhesion molecule 2 (435 aa).

A signal peptide spans 1–24; the sequence is MIWKRSAVLRFYSVCGLLLLGSQG. Topologically, residues 25–367 are extracellular; that stretch reads QFPLTQNVTV…SLAGQNGPDH (343 aa). An Ig-like V-type domain is found at 27 to 119; it reads PLTQNVTVVE…PVKTSKAYLT (93 aa). Residues Asn-31 and Asn-51 are each glycosylated (N-linked (GlcNAc...) asparagine). 3 disulfide bridges follow: Cys-44-Cys-104, Cys-146-Cys-203, and Cys-248-Cys-296. Ig-like C2-type domains follow at residues 127-219 and 227-312; these read PQIS…VAMQ and PSVK…YVLI. N-linked (GlcNAc...) asparagine glycosylation is present at Asn-291. Positions 341-351 are enriched in low complexity; that stretch reads TTSPSTSASSS. Residues 341 to 360 are disordered; that stretch reads TTSPSTSASSSSRRDPNSLA. The chain crosses the membrane as a helical span at residues 368-388; it reads ALIGGIVAVVVFVTLCSIFLL. Topologically, residues 389 to 435 are cytoplasmic; the sequence is GRYLARHKGTYLTNEAKGAEDAPDADTAIINAEGSQVNAEEKKEYFI. Ser-423 is subject to Phosphoserine.

Belongs to the nectin family. Post-translationally, glycosylation at Asn-51 reduces adhesive binding.

It localises to the cell membrane. Its subcellular location is the synapse. The protein localises to the cell projection. The protein resides in the axon. Its function is as follows. Adhesion molecule that engages in homo- and heterophilic interactions with the other nectin-like family members, leading to cell aggregation. Important for synapse organization, providing regulated trans-synaptic adhesion. Preferentially binds to oligodendrocytes. This chain is Cell adhesion molecule 2 (Cadm2), found in Rattus norvegicus (Rat).